The following is a 317-amino-acid chain: Cytochrome f (317 aa).

The first 31 residues, 1–31 (MIFKPQSFLKAIVLSMTITFAFNMSAPIASA), serve as a signal peptide directing secretion. Y32, C52, C55, and H56 together coordinate heme. A helical membrane pass occupies residues 280–302 (PVRIQGLLAFFACILLAQILLVV).

The protein belongs to the cytochrome f family. As to quaternary structure, the 4 large subunits of the cytochrome b6-f complex are cytochrome b6, subunit IV (17 kDa polypeptide, petD), cytochrome f and the Rieske protein, while the 4 small subunits are PetG, PetL, PetM and PetN. The complex functions as a dimer. Requires heme as cofactor.

Its subcellular location is the plastid. The protein localises to the chloroplast thylakoid membrane. Component of the cytochrome b6-f complex, which mediates electron transfer between photosystem II (PSII) and photosystem I (PSI), cyclic electron flow around PSI, and state transitions. The sequence is that of Cytochrome f from Chlamydomonas subcaudata.